Here is a 540-residue protein sequence, read N- to C-terminus: Light-independent protochlorophyllide reductase subunit B (540 aa).

Aspartate 36 contacts [4Fe-4S] cluster. Residue aspartate 287 is the Proton donor of the active site. 422–423 is a substrate binding site; that stretch reads GL.

Belongs to the ChlB/BchB/BchZ family. Protochlorophyllide reductase is composed of three subunits; BchL, BchN and BchB. Forms a heterotetramer of two BchB and two BchN subunits. It depends on [4Fe-4S] cluster as a cofactor.

The catalysed reaction is chlorophyllide a + oxidized 2[4Fe-4S]-[ferredoxin] + 2 ADP + 2 phosphate = protochlorophyllide a + reduced 2[4Fe-4S]-[ferredoxin] + 2 ATP + 2 H2O. It functions in the pathway porphyrin-containing compound metabolism; bacteriochlorophyll biosynthesis (light-independent). Its function is as follows. Component of the dark-operative protochlorophyllide reductase (DPOR) that uses Mg-ATP and reduced ferredoxin to reduce ring D of protochlorophyllide (Pchlide) to form chlorophyllide a (Chlide). This reaction is light-independent. The NB-protein (BchN-BchB) is the catalytic component of the complex. This is Light-independent protochlorophyllide reductase subunit B from Rhodopseudomonas palustris (strain TIE-1).